Consider the following 343-residue polypeptide: MKLRFGVTAAEKKAWIVFLVLLGLTAAVLIISAGLGQRFIPPWDVAKTFFGAGSKLDELMIMSFRMPRILTALCAGVCLAAAGAILQGLVRNPLASPDIIGITGGAAVAVVLLMMFFSDRSSSLTISLSWLPAAAFIGASAVGLIVYLLAYKNGASTFRLVLIGIGFSMSAQAMTTLLMIKGPIYRASQANVYITGSVYGSNWQHVKIAIILSVILLFICFVALKNMNIQVLGEDIAAGAGSAVQRNRFFLLLLSTALTGCAVSVAGTIGFVGLMAPHIARRLVGSSYGALLPASALIGALLVLTADIVGRTLFAPVEVPAGVFTAAIGAPYFIYLLYKTRNS.

9 consecutive transmembrane segments (helical) span residues 15-35, 69-89, 97-117, 130-150, 160-180, 204-224, 249-269, 289-309, and 317-337; these read WIVF…SAGL, ILTA…LQGL, PDII…MMFF, WLPA…YLLA, LVLI…LLMI, QHVK…FVAL, FFLL…AGTI, GALL…ADIV, and VEVP…IYLL.

It belongs to the binding-protein-dependent transport system permease family. FecCD subfamily. The complex is composed of one ATP-binding protein (YusV), two transmembrane proteins (YfiZ and YfhA) and a solute-binding protein (YfiY).

It localises to the cell membrane. In terms of biological role, part of the ABC transporter complex YfiYZ/YfhA/YusV involved in import of the iron-hydroxamate siderophores schizokinen, arthrobactin and corprogen. The chain is Probable siderophore transport system permease protein YfhA (yfhA) from Bacillus subtilis (strain 168).